The following is a 779-amino-acid chain: LPS-assembly protein LptD (779 aa).

The N-terminal stretch at Met-1–Ala-23 is a signal peptide.

This sequence belongs to the LptD family. As to quaternary structure, component of the lipopolysaccharide transport and assembly complex. Interacts with LptE and LptA.

It is found in the cell outer membrane. Together with LptE, is involved in the assembly of lipopolysaccharide (LPS) at the surface of the outer membrane. This is LPS-assembly protein LptD from Haemophilus ducreyi (strain 35000HP / ATCC 700724).